The sequence spans 828 residues: Chitin synthase 7 (828 aa).

6 helical membrane-spanning segments follow: residues 17–37, 57–77, 95–115, 444–464, 473–493, and 501–521; these read VIVG…VAAF, AVVV…IMVV, VGLQ…PWLF, FMQN…LAIL, LPVG…IYFG, and IWLY…YMVY. Asn615 carries an N-linked (GlcNAc...) asparagine glycan. 2 stretches are compositionally biased toward low complexity: residues 740–752 and 813–822; these read SLVS…SNSN and SNNDPNNSNS. 2 disordered regions span residues 740–780 and 793–828; these read SLVS…LGRA and LEIG…HQQR. N-linked (GlcNAc...) asparagine glycosylation occurs at Asn818.

Belongs to the chitin synthase family. Class VII subfamily.

The protein resides in the membrane. It catalyses the reaction [(1-&gt;4)-N-acetyl-beta-D-glucosaminyl](n) + UDP-N-acetyl-alpha-D-glucosamine = [(1-&gt;4)-N-acetyl-beta-D-glucosaminyl](n+1) + UDP + H(+). In terms of biological role, polymerizes chitin, a structural polymer of the cell wall and septum, by transferring the sugar moiety of UDP-GlcNAc to the non-reducing end of the growing chitin polymer. Required for normal appressorial chitin content and for the normal formation and function of these infection structures. This is Chitin synthase 7 from Pyricularia oryzae (strain 70-15 / ATCC MYA-4617 / FGSC 8958) (Rice blast fungus).